Here is a 273-residue protein sequence, read N- to C-terminus: 4-hydroxy-tetrahydrodipicolinate reductase (273 aa).

Residues 12-17 (GAGGRM) and Glu38 each bind NAD(+). Arg39 contributes to the NADP(+) binding site. NAD(+) contacts are provided by residues 102–104 (GTT) and 126–129 (AANF). Residue His159 is the Proton donor/acceptor of the active site. His160 is a binding site for (S)-2,3,4,5-tetrahydrodipicolinate. The active-site Proton donor is the Lys163. 169 to 170 (GT) serves as a coordination point for (S)-2,3,4,5-tetrahydrodipicolinate.

This sequence belongs to the DapB family. As to quaternary structure, homotetramer.

Its subcellular location is the cytoplasm. The enzyme catalyses (S)-2,3,4,5-tetrahydrodipicolinate + NAD(+) + H2O = (2S,4S)-4-hydroxy-2,3,4,5-tetrahydrodipicolinate + NADH + H(+). It catalyses the reaction (S)-2,3,4,5-tetrahydrodipicolinate + NADP(+) + H2O = (2S,4S)-4-hydroxy-2,3,4,5-tetrahydrodipicolinate + NADPH + H(+). Its pathway is amino-acid biosynthesis; L-lysine biosynthesis via DAP pathway; (S)-tetrahydrodipicolinate from L-aspartate: step 4/4. Catalyzes the conversion of 4-hydroxy-tetrahydrodipicolinate (HTPA) to tetrahydrodipicolinate. This is 4-hydroxy-tetrahydrodipicolinate reductase from Klebsiella pneumoniae (strain 342).